Here is a 356-residue protein sequence, read N- to C-terminus: Protein-arginine kinase (356 aa).

Residues 24–256 (IIISSRVRVA…RQILAQEQAA (233 aa)) enclose the Phosphagen kinase C-terminal domain. ATP is bound by residues 27 to 31 (SSRVR), H93, R127, 178 to 182 (RASVM), and 209 to 214 (RGLYGE). The RDXXRA motif of the pArg binding pocket involved in allosteric regulation signature appears at 339–344 (RDIFRA).

It belongs to the ATP:guanido phosphotransferase family.

It carries out the reaction L-arginyl-[protein] + ATP = N(omega)-phospho-L-arginyl-[protein] + ADP + H(+). With respect to regulation, appears to be allosterically activated by the binding of pArg-containing polypeptides to the pArg-binding pocket localized in the C-terminal domain of McsB. In terms of biological role, catalyzes the specific phosphorylation of arginine residues in proteins. This is Protein-arginine kinase from Pelotomaculum thermopropionicum (strain DSM 13744 / JCM 10971 / SI).